The following is a 286-amino-acid chain: 33 kDa chaperonin (286 aa).

2 cysteine pairs are disulfide-bonded: C233/C235 and C267/C270.

It belongs to the HSP33 family. Under oxidizing conditions two disulfide bonds are formed involving the reactive cysteines. Under reducing conditions zinc is bound to the reactive cysteines and the protein is inactive.

Its subcellular location is the cytoplasm. Functionally, redox regulated molecular chaperone. Protects both thermally unfolding and oxidatively damaged proteins from irreversible aggregation. Plays an important role in the bacterial defense system toward oxidative stress. The polypeptide is 33 kDa chaperonin (Histophilus somni (strain 2336) (Haemophilus somnus)).